Reading from the N-terminus, the 274-residue chain is MQQLQNVIETAFERRADITPANVDTVTREAVNQVISLLDSGALRVAEKIDGQWVTHQWLKKAVLLSFRINDNQVIDGGESRYFDKVPMKFADYDEARFQKEGFRVVPPAAVRQGAFIARNTVLMPSYVNIGAYVDEGTMVDTWATVGSCAQIGKNVHLSGGVGIGGVLEPLQANPTIIEDNCFIGARSEVVEGVIVEEGSVISMGVYLGQSTKIYDRETGEVHYGRVPAGSVVVSGNLPSKDGKYSLYCAVIVKKVDAKTRGKVGINELLRTID.

It belongs to the transferase hexapeptide repeat family.

Its subcellular location is the cytoplasm. The catalysed reaction is (S)-2,3,4,5-tetrahydrodipicolinate + succinyl-CoA + H2O = (S)-2-succinylamino-6-oxoheptanedioate + CoA. It functions in the pathway amino-acid biosynthesis; L-lysine biosynthesis via DAP pathway; LL-2,6-diaminopimelate from (S)-tetrahydrodipicolinate (succinylase route): step 1/3. The sequence is that of 2,3,4,5-tetrahydropyridine-2,6-dicarboxylate N-succinyltransferase from Salmonella heidelberg (strain SL476).